A 176-amino-acid polypeptide reads, in one-letter code: ATP-dependent protease subunit HslV (176 aa).

The active site involves T2. Na(+)-binding residues include G157, C160, and T163.

It belongs to the peptidase T1B family. HslV subfamily. A double ring-shaped homohexamer of HslV is capped on each side by a ring-shaped HslU homohexamer. The assembly of the HslU/HslV complex is dependent on binding of ATP.

The protein resides in the cytoplasm. The enzyme catalyses ATP-dependent cleavage of peptide bonds with broad specificity.. Allosterically activated by HslU binding. Functionally, protease subunit of a proteasome-like degradation complex believed to be a general protein degrading machinery. In Pectobacterium atrosepticum (strain SCRI 1043 / ATCC BAA-672) (Erwinia carotovora subsp. atroseptica), this protein is ATP-dependent protease subunit HslV.